The chain runs to 394 residues: Aspergillopepsin-1 (394 aa).

An N-terminal signal peptide occupies residues 1–20 (MVVFSKTAALVLGLSTAVSA). A propeptide spans 21–69 (APAPTRKGFTINQIARPANKTRTVNLPGLYARSLAKFGGTVPQSVKEAA) (activation peptide). The region spanning 85 to 391 (YLTPVTVGKS…NSEGPKLGFA (307 aa)) is the Peptidase A1 domain. Active-site residues include Asp-101 and Asp-283. Cys-319 and Cys-354 are disulfide-bonded.

The protein belongs to the peptidase A1 family.

The protein localises to the secreted. The enzyme catalyses Hydrolysis of proteins with broad specificity. Generally favors hydrophobic residues in P1 and P1', but also accepts Lys in P1, which leads to activation of trypsinogen. Does not clot milk.. In terms of biological role, secreted aspartic endopeptidase that allows assimilation of proteinaceous substrates. The scissile peptide bond is attacked by a nucleophilic water molecule activated by two aspartic residues in the active site. Shows a broad primary substrate specificity. Favors hydrophobic residues at the P1 and P1' positions, but also accepts a lysine residue in the P1 position, leading to the activation of trypsinogen and chymotrypsinogen A. The protein is Aspergillopepsin-1 of Aspergillus niger.